The chain runs to 348 residues: NADH-ubiquinone oxidoreductase chain 2 (348 aa).

The next 9 helical transmembrane spans lie at 1–21 (MSPY…TITA), 60–80 (FLTQ…NAWL), 96–116 (TLII…TWLP), 149–169 (NPTL…WGGL), 177–194 (ILAY…LILQ), 198–220 (TLTL…TFIL), 238–258 (ILTS…PLTG), 273–293 (DLAP…YFYL), and 328–348 (MAAS…LFNI).

The protein belongs to the complex I subunit 2 family.

The protein resides in the mitochondrion inner membrane. The catalysed reaction is a ubiquinone + NADH + 5 H(+)(in) = a ubiquinol + NAD(+) + 4 H(+)(out). Its function is as follows. Core subunit of the mitochondrial membrane respiratory chain NADH dehydrogenase (Complex I) that is believed to belong to the minimal assembly required for catalysis. Complex I functions in the transfer of electrons from NADH to the respiratory chain. The immediate electron acceptor for the enzyme is believed to be ubiquinone. The protein is NADH-ubiquinone oxidoreductase chain 2 (MT-ND2) of Tetraodon nigroviridis (Spotted green pufferfish).